The sequence spans 101 residues: Small ribosomal subunit protein bS18c (101 aa).

Basic residues predominate over residues Met1–Leu19. The tract at residues Met1–Gly23 is disordered.

It belongs to the bacterial ribosomal protein bS18 family. In terms of assembly, part of the 30S ribosomal subunit.

The protein resides in the plastid. It localises to the chloroplast. This chain is Small ribosomal subunit protein bS18c, found in Acorus calamus (Sweet flag).